The chain runs to 81 residues: Protein RADIALIS-like 3 (81 aa).

One can recognise an SANT domain in the interval 7–62; that stretch reads SSSASWTRKENKLFERALATYDQDTPDRWHNVARAVGGKSAEEVRRHYELLIRDVN.

In terms of tissue distribution, expressed just outside the vascular bundles in the rosette stem and the leaf traces. Not detected in floral primordia.

It is found in the nucleus. Probable transcription factor. This Arabidopsis thaliana (Mouse-ear cress) protein is Protein RADIALIS-like 3 (RL3).